The following is a 453-amino-acid chain: tRNA modification GTPase MnmE (453 aa).

Arg22, Glu79, and Lys119 together coordinate (6S)-5-formyl-5,6,7,8-tetrahydrofolate. A TrmE-type G domain is found at 215–376; sequence GMKVVIAGRP…LKQHLKSLMG (162 aa). Asn225 contributes to the K(+) binding site. Residues 225 to 230, 244 to 250, 269 to 272, and 334 to 337 contribute to the GTP site; these read NAGKSS, TEIAGTT, DTAG, and NKAD. Ser229 contributes to the Mg(2+) binding site. 3 residues coordinate K(+): Thr244, Ile246, and Thr249. Thr250 is a Mg(2+) binding site. Lys453 is a (6S)-5-formyl-5,6,7,8-tetrahydrofolate binding site.

This sequence belongs to the TRAFAC class TrmE-Era-EngA-EngB-Septin-like GTPase superfamily. TrmE GTPase family. Homodimer. Heterotetramer of two MnmE and two MnmG subunits. Requires K(+) as cofactor.

Its subcellular location is the cytoplasm. Exhibits a very high intrinsic GTPase hydrolysis rate. Involved in the addition of a carboxymethylaminomethyl (cmnm) group at the wobble position (U34) of certain tRNAs, forming tRNA-cmnm(5)s(2)U34. The protein is tRNA modification GTPase MnmE of Shewanella halifaxensis (strain HAW-EB4).